We begin with the raw amino-acid sequence, 67 residues long: MPGVYLNEDDYNFDIALRRFKKQVEKAGILSEMKKRQHYEKPSVMRKKKKAAARKRLLKKIRKMNMA.

The protein belongs to the bacterial ribosomal protein bS21 family.

This is Small ribosomal subunit protein bS21 from Nitratidesulfovibrio vulgaris (strain DP4) (Desulfovibrio vulgaris).